Here is a 357-residue protein sequence, read N- to C-terminus: UPF0283 membrane protein HS_0596 (357 aa).

Helical transmembrane passes span 67-87 (LMATICLFSCGILAQSVQWLV), 96-116 (IAFVFAMVSLFLVLLGLGAII), and 213-233 (AVESALIVAVSPLAIVDMFFI).

The protein belongs to the UPF0283 family.

Its subcellular location is the cell inner membrane. The chain is UPF0283 membrane protein HS_0596 from Histophilus somni (strain 129Pt) (Haemophilus somnus).